The sequence spans 213 residues: LexA repressor (213 aa).

A DNA-binding region (H-T-H motif) is located at residues 27–47 (QTEIARAFGFKGVRAAQYHLE). Active-site for autocatalytic cleavage activity residues include Ser-133 and Lys-170.

Belongs to the peptidase S24 family. As to quaternary structure, homodimer.

It carries out the reaction Hydrolysis of Ala-|-Gly bond in repressor LexA.. In terms of biological role, represses a number of genes involved in the response to DNA damage (SOS response), including recA and lexA. In the presence of single-stranded DNA, RecA interacts with LexA causing an autocatalytic cleavage which disrupts the DNA-binding part of LexA, leading to derepression of the SOS regulon and eventually DNA repair. The protein is LexA repressor of Xanthomonas campestris.